The chain runs to 294 residues: Store-operated calcium entry regulator STIMATE (294 aa).

The segment at 1–22 (MQGPAGNASRGLPGGPPSTVAS) is disordered. Residues 1-28 (MQGPAGNASRGLPGGPPSTVASGAGRCE) are Cytoplasmic-facing. 3 consecutive transmembrane segments (helical) span residues 29–49 (SGALMHSFGIFLQGLLGVVAF), 69–89 (IWFLDTSKQAIGMLFIHFANV), and 102–122 (LYLINFLLDATVGMLLIYVGV). A GXXXG motif motif is present at residues 149–153 (GAWVG). Helical transmembrane passes span 156 to 176 (ALYIVIMIFEKSVVFIVLLIL) and 194 to 214 (LAIVMLIVPFFVNALMFWVVD). Residues 215-294 (NFLMRKGKTK…KKKHRFGLPV (80 aa)) are Cytoplasmic-facing. Residues 227–268 (LEERGANQDSRNGSKVRYRRAASHEESESEILISADDEMEES) form a disordered region. The tract at residues 241–246 (KVRYRR) is required for localization in the endoplasmic reticulum.

Belongs to the STIMATE family. In terms of assembly, homooligomer. Interacts with STIM1. As to expression, widely expressed.

Its subcellular location is the endoplasmic reticulum membrane. Its function is as follows. Acts as a regulator of store-operated Ca(2+) entry (SOCE) at junctional sites that connect the endoplasmic reticulum (ER) and plasma membrane (PM), called ER-plasma membrane (ER-PM) junction or cortical ER. SOCE is a Ca(2+) influx following depletion of intracellular Ca(2+) stores. Acts by interacting with STIM1, promoting STIM1 conformational switch. Involved in STIM1 relocalization to ER-PM junctions. Contributes to the maintenance and reorganization of store-dependent ER-PM junctions. The sequence is that of Store-operated calcium entry regulator STIMATE from Homo sapiens (Human).